Consider the following 383-residue polypeptide: Chaperone protein DnaJ (383 aa).

The J domain occupies 4-68 (DLYETLNVSR…DQRARYDRFG (65 aa)). A CR-type zinc finger spans residues 139 to 221 (GGEKEITINH…CSGRGRNQKQ (83 aa)). C152, C155, C169, C172, C195, C198, C209, and C212 together coordinate Zn(2+). CXXCXGXG motif repeat units follow at residues 152–159 (CETCRGSG), 169–176 (CRNCGGQG), 195–202 (CPNCQGTG), and 209–216 (CPTCSGRG).

The protein belongs to the DnaJ family. In terms of assembly, homodimer. The cofactor is Zn(2+).

The protein resides in the cytoplasm. Participates actively in the response to hyperosmotic and heat shock by preventing the aggregation of stress-denatured proteins and by disaggregating proteins, also in an autonomous, DnaK-independent fashion. Unfolded proteins bind initially to DnaJ; upon interaction with the DnaJ-bound protein, DnaK hydrolyzes its bound ATP, resulting in the formation of a stable complex. GrpE releases ADP from DnaK; ATP binding to DnaK triggers the release of the substrate protein, thus completing the reaction cycle. Several rounds of ATP-dependent interactions between DnaJ, DnaK and GrpE are required for fully efficient folding. Also involved, together with DnaK and GrpE, in the DNA replication of plasmids through activation of initiation proteins. The polypeptide is Chaperone protein DnaJ (Gloeobacter violaceus (strain ATCC 29082 / PCC 7421)).